Reading from the N-terminus, the 603-residue chain is Isocitrate dehydrogenase kinase/phosphatase (603 aa).

Residues 327-333 (APGIKGL) and Lys348 each bind ATP. Asp383 is an active-site residue.

This sequence belongs to the AceK family.

The protein localises to the cytoplasm. It carries out the reaction L-seryl-[isocitrate dehydrogenase] + ATP = O-phospho-L-seryl-[isocitrate dehydrogenase] + ADP + H(+). Its function is as follows. Bifunctional enzyme which can phosphorylate or dephosphorylate isocitrate dehydrogenase (IDH) on a specific serine residue. This is a regulatory mechanism which enables bacteria to bypass the Krebs cycle via the glyoxylate shunt in response to the source of carbon. When bacteria are grown on glucose, IDH is fully active and unphosphorylated, but when grown on acetate or ethanol, the activity of IDH declines drastically concomitant with its phosphorylation. This Burkholderia thailandensis (strain ATCC 700388 / DSM 13276 / CCUG 48851 / CIP 106301 / E264) protein is Isocitrate dehydrogenase kinase/phosphatase.